Here is a 321-residue protein sequence, read N- to C-terminus: L-carnitine dehydrogenase (321 aa).

7–12 (GTGVIG) serves as a coordination point for NAD(+).

It belongs to the 3-hydroxyacyl-CoA dehydrogenase family. L-carnitine dehydrogenase subfamily. In terms of assembly, homodimer.

Its subcellular location is the cytoplasm. It carries out the reaction carnitine + NAD(+) = 3-dehydrocarnitine + NADH + H(+). The protein operates within amine and polyamine metabolism; carnitine metabolism. Its function is as follows. Catalyzes the NAD(+)-dependent oxidation of L-carnitine to 3-dehydrocarnitine. This is L-carnitine dehydrogenase from Staphylococcus epidermidis (strain ATCC 12228 / FDA PCI 1200).